Reading from the N-terminus, the 121-residue chain is Small ribosomal subunit protein uS13 (121 aa).

The segment at 93–121 is disordered; it reads RGLPMRGQRTRTNARTRKGPRKGAAALKK.

The protein belongs to the universal ribosomal protein uS13 family. Part of the 30S ribosomal subunit. Forms a loose heterodimer with protein S19. Forms two bridges to the 50S subunit in the 70S ribosome.

Functionally, located at the top of the head of the 30S subunit, it contacts several helices of the 16S rRNA. In the 70S ribosome it contacts the 23S rRNA (bridge B1a) and protein L5 of the 50S subunit (bridge B1b), connecting the 2 subunits; these bridges are implicated in subunit movement. Contacts the tRNAs in the A and P-sites. This Acidovorax ebreus (strain TPSY) (Diaphorobacter sp. (strain TPSY)) protein is Small ribosomal subunit protein uS13.